Reading from the N-terminus, the 309-residue chain is Homoserine O-succinyltransferase (309 aa).

The active-site Acyl-thioester intermediate is the Cys142. The substrate site is built by Lys163 and Ser192. His235 serves as the catalytic Proton acceptor. Glu237 is a catalytic residue. Arg249 contributes to the substrate binding site.

Belongs to the MetA family. Homodimer.

Its subcellular location is the cytoplasm. The catalysed reaction is L-homoserine + succinyl-CoA = O-succinyl-L-homoserine + CoA. It participates in amino-acid biosynthesis; L-methionine biosynthesis via de novo pathway; O-succinyl-L-homoserine from L-homoserine: step 1/1. Its function is as follows. Transfers a succinyl group from succinyl-CoA to L-homoserine, forming succinyl-L-homoserine. This Shigella sonnei (strain Ss046) protein is Homoserine O-succinyltransferase.